The sequence spans 180 residues: MVKVGITGPVGSIKAEALAKIMEMLANEGKIIEGFLVSEKVEHNKLISYSVMDILSKKKAEFARQDIVSRVKIDKLGVDTRLLEDIVIPSLERAKSEADVIIIDELGKIENTTKNIKNIIEDVLKLDKTIIVTLHKKSRNPVLQEFRSLESVRVFDITPINKNILPFKILKVINGEEESI.

ATP contacts are provided by residues 8 to 15 (GPVGSIKA) and 100 to 107 (VIIIDELG).

Belongs to the THEP1 NTPase family.

It carries out the reaction a ribonucleoside 5'-triphosphate + H2O = a ribonucleoside 5'-diphosphate + phosphate + H(+). Has nucleotide phosphatase activity towards ATP, GTP, CTP, TTP and UTP. May hydrolyze nucleoside diphosphates with lower efficiency. In Picrophilus torridus (strain ATCC 700027 / DSM 9790 / JCM 10055 / NBRC 100828 / KAW 2/3), this protein is Nucleoside-triphosphatase THEP1.